Consider the following 188-residue polypeptide: Peptidyl-tRNA hydrolase (188 aa).

Tyr-14 lines the tRNA pocket. His-19 functions as the Proton acceptor in the catalytic mechanism. TRNA-binding residues include Tyr-64, Asn-66, and Asn-112.

The protein belongs to the PTH family. Monomer.

It localises to the cytoplasm. The catalysed reaction is an N-acyl-L-alpha-aminoacyl-tRNA + H2O = an N-acyl-L-amino acid + a tRNA + H(+). Hydrolyzes ribosome-free peptidyl-tRNAs (with 1 or more amino acids incorporated), which drop off the ribosome during protein synthesis, or as a result of ribosome stalling. Its function is as follows. Catalyzes the release of premature peptidyl moieties from peptidyl-tRNA molecules trapped in stalled 50S ribosomal subunits, and thus maintains levels of free tRNAs and 50S ribosomes. This chain is Peptidyl-tRNA hydrolase, found in Bacillus velezensis (strain DSM 23117 / BGSC 10A6 / LMG 26770 / FZB42) (Bacillus amyloliquefaciens subsp. plantarum).